The sequence spans 869 residues: Protein translocase subunit SecA (869 aa).

ATP-binding positions include glutamine 85, 103-107, and aspartate 508; that span reads GEGKT.

Belongs to the SecA family. Monomer and homodimer. Part of the essential Sec protein translocation apparatus which comprises SecA, SecYEG and auxiliary proteins SecDF. Other proteins may also be involved.

It is found in the cell membrane. Its subcellular location is the cytoplasm. The catalysed reaction is ATP + H2O + cellular proteinSide 1 = ADP + phosphate + cellular proteinSide 2.. Functionally, part of the Sec protein translocase complex. Interacts with the SecYEG preprotein conducting channel. Has a central role in coupling the hydrolysis of ATP to the transfer of proteins into and across the cell membrane, serving as an ATP-driven molecular motor driving the stepwise translocation of polypeptide chains across the membrane. The polypeptide is Protein translocase subunit SecA (Deinococcus geothermalis (strain DSM 11300 / CIP 105573 / AG-3a)).